Reading from the N-terminus, the 430-residue chain is Long-chain specific acyl-CoA dehydrogenase, mitochondrial (430 aa).

A mitochondrion-targeting transit peptide spans 1–30; it reads MAARLLRGSLRVLGGHRAPRQLPAARCSHS. The residue at position 42 (Lys42) is an N6-acetyllysine. At Ser54 the chain carries Phosphoserine. Lys66 and Lys81 each carry N6-acetyllysine; alternate. Residues Lys66 and Lys81 each carry the N6-succinyllysine; alternate modification. An N6-acetyllysine mark is found at Lys92 and Lys95. The residue at position 165 (Lys165) is an N6-succinyllysine. FAD contacts are provided by residues 170-179 and 203-205; these read IAMTEPGAGS and FIS. Ser179 is a substrate binding site. 227–228 contributes to the substrate binding site; that stretch reads AH. Lys240 is subject to N6-succinyllysine. Lys254 and Lys279 each carry N6-acetyllysine; alternate. Lys254 and Lys279 each carry N6-succinyllysine; alternate. Substrate-binding positions include Tyr282 and 289–292; that span reads PQER. Catalysis depends on Glu291, which acts as the Proton acceptor. Arg317 provides a ligand contact to FAD. Lys318 carries the N6-acetyllysine modification. Lys322 is modified (N6-acetyllysine; alternate). Lys322 is modified (N6-succinyllysine; alternate). Residue Gln328 participates in FAD binding. Lys358 is subject to N6-acetyllysine. Ser362 is subject to Phosphoserine. 385–389 serves as a coordination point for FAD; that stretch reads QLHGG. 412–413 contributes to the substrate binding site; that stretch reads GG. 414–416 lines the FAD pocket; it reads TNE.

Belongs to the acyl-CoA dehydrogenase family. In terms of assembly, homotetramer. It depends on FAD as a cofactor. Post-translationally, acetylation at Lys-318 and Lys-322 in proximity of the cofactor-binding sites strongly reduces catalytic activity. These sites are deacetylated by SIRT3.

The protein resides in the mitochondrion matrix. It catalyses the reaction a long-chain 2,3-saturated fatty acyl-CoA + oxidized [electron-transfer flavoprotein] + H(+) = a long-chain (2E)-enoyl-CoA + reduced [electron-transfer flavoprotein]. The catalysed reaction is hexanoyl-CoA + oxidized [electron-transfer flavoprotein] + H(+) = (2E)-hexenoyl-CoA + reduced [electron-transfer flavoprotein]. It carries out the reaction octanoyl-CoA + oxidized [electron-transfer flavoprotein] + H(+) = (2E)-octenoyl-CoA + reduced [electron-transfer flavoprotein]. The enzyme catalyses decanoyl-CoA + oxidized [electron-transfer flavoprotein] + H(+) = (2E)-decenoyl-CoA + reduced [electron-transfer flavoprotein]. It catalyses the reaction dodecanoyl-CoA + oxidized [electron-transfer flavoprotein] + H(+) = (2E)-dodecenoyl-CoA + reduced [electron-transfer flavoprotein]. The catalysed reaction is tetradecanoyl-CoA + oxidized [electron-transfer flavoprotein] + H(+) = (2E)-tetradecenoyl-CoA + reduced [electron-transfer flavoprotein]. It carries out the reaction oxidized [electron-transfer flavoprotein] + hexadecanoyl-CoA + H(+) = (2E)-hexadecenoyl-CoA + reduced [electron-transfer flavoprotein]. The enzyme catalyses octadecanoyl-CoA + oxidized [electron-transfer flavoprotein] + H(+) = (2E)-octadecenoyl-CoA + reduced [electron-transfer flavoprotein]. It catalyses the reaction eicosanoyl-CoA + oxidized [electron-transfer flavoprotein] + H(+) = (2E)-eicosenoyl-CoA + reduced [electron-transfer flavoprotein]. The catalysed reaction is docosanoyl-CoA + oxidized [electron-transfer flavoprotein] + H(+) = (2E)-docosenoyl-CoA + reduced [electron-transfer flavoprotein]. It carries out the reaction tetracosanoyl-CoA + oxidized [electron-transfer flavoprotein] + H(+) = (2E)-tetracosenoyl-CoA + reduced [electron-transfer flavoprotein]. The enzyme catalyses (5E)-tetradecenoyl-CoA + oxidized [electron-transfer flavoprotein] + H(+) = (2E,5E)-tetradecadienoyl-CoA + reduced [electron-transfer flavoprotein]. It catalyses the reaction (5Z)-tetradecenoyl-CoA + oxidized [electron-transfer flavoprotein] + H(+) = (2E,5Z)-tetradecadienoyl-CoA + reduced [electron-transfer flavoprotein]. The catalysed reaction is oxidized [electron-transfer flavoprotein] + (9Z)-octadecenoyl-CoA + H(+) = (2E,9Z)-octadecadienoyl-CoA + reduced [electron-transfer flavoprotein]. It participates in lipid metabolism; mitochondrial fatty acid beta-oxidation. In terms of biological role, long-chain specific acyl-CoA dehydrogenase is one of the acyl-CoA dehydrogenases that catalyze the first step of mitochondrial fatty acid beta-oxidation, an aerobic process breaking down fatty acids into acetyl-CoA and allowing the production of energy from fats. The first step of fatty acid beta-oxidation consists in the removal of one hydrogen from C-2 and C-3 of the straight-chain fatty acyl-CoA thioester, resulting in the formation of trans-2-enoyl-CoA. Among the different mitochondrial acyl-CoA dehydrogenases, long-chain specific acyl-CoA dehydrogenase can act on saturated and unsaturated acyl-CoAs with 6 to 24 carbons with a preference for 8 to 18 carbons long primary chains. The protein is Long-chain specific acyl-CoA dehydrogenase, mitochondrial of Homo sapiens (Human).